The sequence spans 555 residues: Transmembrane protein 87A (555 aa).

A signal peptide spans 1–21 (MAVAAWLQVSPVIFLLLGAQP). Topologically, residues 22–225 (FPLSFLGAGP…YEYLTLEDYP (204 aa)) are lumenal. Disulfide bonds link Cys-74-Cys-128 and Cys-89-Cys-431. Residues Asn-79, Asn-157, and Asn-160 are each glycosylated (N-linked (GlcNAc...) asparagine). Residues 226–246 (LMIFFMVMCIVYVLFGVLWLA) traverse the membrane as a helical segment. Residues 247–257 (WSACYWRDLLR) are Cytoplasmic-facing. A helical membrane pass occupies residues 258 to 278 (IQFWIGAVIFLGMFEKAVFYA). The Lumenal segment spans residues 279 to 305 (EFQNIRYKGESVQNALVLAELLSAVKR). Residues 306–322 (SLARTLVIIVSLGYGIV) traverse the membrane as a helical segment. The Cytoplasmic portion of the chain corresponds to 323 to 325 (KPR). A helical membrane pass occupies residues 326–346 (LGVTLHKVVVAGALYLLFSGM). Residues 347 to 361 (EGVLRVTGAQTDLAS) are Lumenal-facing. Residues 362–382 (LAFIPLAFLDTALCWWIFISL) form a helical membrane-spanning segment. At 383 to 403 (TQTMKLLKLRRNIVKLSLYRH) the chain is on the cytoplasmic side. The helical transmembrane segment at 404-424 (FTNTLILAVAASIVFIIWTTM) threads the bilayer. Residues 425–437 (KFRIVTCQSDWRE) are Lumenal-facing. Residues 438–458 (LWVDDAIWRLLFSMILFVIMI) traverse the membrane as a helical segment. Over 459–555 (LWRPSANNQR…ITHFERSKME (97 aa)) the chain is Cytoplasmic. The segment at 491 to 515 (SFEGMKMRSTKQEPNGTSKVNKAQE) is disordered. Polar residues predominate over residues 502–511 (QEPNGTSKVN). Ser-540 is modified (phosphoserine).

It belongs to the LU7TM family. TMEM87 subfamily. In terms of assembly, may interact with STOML3; STOML3 potentiates the mechanosensitive ion channel activity associated with TMEM87A. Highly expressed in sensory neurons responsive to mechanical force.

The protein resides in the cell membrane. It localises to the golgi apparatus membrane. Its subcellular location is the cell projection. It is found in the ruffle. Functionally, potential monoatomic ion channel gated by mechanical force, implicated in normal touch sensitivity through the generation of mechanically activated currents. However, a direct channel activity is debated and an alternative could be that it functions as a chaperone for an unidentified mechanosensitive ion channel. Could also be involved in cell mechanosensitivity regulating cell adhesion and migration. May also be involved in retrograde transport from endosomes to the trans-Golgi network (TGN). The chain is Transmembrane protein 87A from Mus musculus (Mouse).